A 332-amino-acid polypeptide reads, in one-letter code: Large ribosomal subunit protein uL10 (332 aa).

The tract at residues 294 to 332 (QAAAAPVAVEDNTEEPEEEEEEEEDAAESAAAGLGALFG) is disordered. The segment covering 304 to 320 (DNTEEPEEEEEEEEDAA) has biased composition (acidic residues).

The protein belongs to the universal ribosomal protein uL10 family. As to quaternary structure, part of the 50S ribosomal subunit. Forms part of the ribosomal stalk which helps the ribosome interact with GTP-bound translation factors. Forms a heptameric L10(L12)2(L12)2(L12)2 complex, where L10 forms an elongated spine to which the L12 dimers bind in a sequential fashion.

Forms part of the ribosomal stalk, playing a central role in the interaction of the ribosome with GTP-bound translation factors. The chain is Large ribosomal subunit protein uL10 from Methanosphaera stadtmanae (strain ATCC 43021 / DSM 3091 / JCM 11832 / MCB-3).